The primary structure comprises 203 residues: Outer-membrane lipoprotein carrier protein (203 aa).

Residues 1–21 form the signal peptide; the sequence is MKKMAIACALLSSVVASSVWA. The segment at 178 to 203 is disordered; that stretch reads QQNGAVEPSKFTFTPPQGVTIDDQRK.

The protein belongs to the LolA family. As to quaternary structure, monomer.

Its subcellular location is the periplasm. In terms of biological role, participates in the translocation of lipoproteins from the inner membrane to the outer membrane. Only forms a complex with a lipoprotein if the residue after the N-terminal Cys is not an aspartate (The Asp acts as a targeting signal to indicate that the lipoprotein should stay in the inner membrane). This Salmonella typhi protein is Outer-membrane lipoprotein carrier protein.